The chain runs to 880 residues: Endoglucanase E-4 (880 aa).

An N-terminal signal peptide occupies residues 1-46 (MSVTEPPPRRRGRHSRARRFLTSLGATAALTAGMLGVPLATGTAHA). The Nucleophile role is filled by aspartate 104. Active-site residues include histidine 422, histidine 427, aspartate 461, and glutamate 470. The 149-residue stretch at 504-652 (PDGPEIFVEA…GVPVWGTAPE (149 aa)) folds into the CBM3 domain. A disordered region spans residues 647–688 (WGTAPEEGEEPGGGEGPGGGEEPGEDVTPPSAPGSPAVRDVT). Residues 678–770 (APGSPAVRDV…TVSFTTLAEN (93 aa)) enclose the Fibronectin type-III domain. A CBM2 domain is found at 771–880 (GGGPDASCTV…TLNGEPCALA (110 aa)).

Belongs to the glycosyl hydrolase 9 (cellulase E) family.

The enzyme catalyses Endohydrolysis of (1-&gt;4)-beta-D-glucosidic linkages in cellulose, lichenin and cereal beta-D-glucans.. It functions in the pathway glycan metabolism; cellulose degradation. This chain is Endoglucanase E-4 (celD), found in Thermobifida fusca (Thermomonospora fusca).